The following is a 507-amino-acid chain: MTQMLHSLLRAVGLPVPEGLANPSLAMVSCDSRSVAQGCLFLGLPGEQVDGGSFWRQALAAGAEAAVIGPAAAALQPPGPTDAVVVVPEPVAAWVGQLAAAFWQQPSSRFALIGVTGTNGKTTTTHLIEHLSVAVGRSTALFGTLVNRWPNYSVPATHTTAFADRLQAQLAQAVEAGAELGVMEVSSHALEQQRVAGCRFAGAVFTNLTQDHLDYHCSMEAYFEAKAQLFAPPLLESGSAKAVVNIDSPWGARLAQRLGDTCWRSSLAEGVLQQADAELKMTELTMSSDGVQGRLISPCGEGWFDSPLMGRFNLMNLLQAVGVLLQQGLPLPLLLKAIADFRGVPGRMERVLIPAADATQVPTVLVDYAHTPDGLENALKASRPFTSKNLCCVFGCGGDRDRGKRSQMAAIAARLADRVVVTSDNPRTEDPQQILADVVAGIPEGTTCTVEVDRAVAIALAIAEAAPGDVVLVAGKGHEDYQILGTSKVHFDDREEAERALKQRLDG.

S32 serves as a coordination point for UDP-N-acetyl-alpha-D-muramoyl-L-alanyl-D-glutamate. 117 to 123 (GTNGKTT) lines the ATP pocket. UDP-N-acetyl-alpha-D-muramoyl-L-alanyl-D-glutamate contacts are provided by residues 159–160 (TT), S186, Q192, and R194. The residue at position 226 (K226) is an N6-carboxylysine. Meso-2,6-diaminopimelate contacts are provided by residues R400, 424–427 (DNPR), G475, and E479. Positions 424-427 (DNPR) match the Meso-diaminopimelate recognition motif motif.

It belongs to the MurCDEF family. MurE subfamily. Mg(2+) serves as cofactor. Carboxylation is probably crucial for Mg(2+) binding and, consequently, for the gamma-phosphate positioning of ATP.

It is found in the cytoplasm. The catalysed reaction is UDP-N-acetyl-alpha-D-muramoyl-L-alanyl-D-glutamate + meso-2,6-diaminopimelate + ATP = UDP-N-acetyl-alpha-D-muramoyl-L-alanyl-gamma-D-glutamyl-meso-2,6-diaminopimelate + ADP + phosphate + H(+). The protein operates within cell wall biogenesis; peptidoglycan biosynthesis. In terms of biological role, catalyzes the addition of meso-diaminopimelic acid to the nucleotide precursor UDP-N-acetylmuramoyl-L-alanyl-D-glutamate (UMAG) in the biosynthesis of bacterial cell-wall peptidoglycan. This chain is UDP-N-acetylmuramoyl-L-alanyl-D-glutamate--2,6-diaminopimelate ligase, found in Prochlorococcus marinus (strain MIT 9313).